The sequence spans 514 residues: Bifunctional lysine-specific demethylase and histidyl-hydroxylase NO66 (514 aa).

The segment at Met-1–Leu-53 is disordered. A compositionally biased stretch (acidic residues) spans Glu-7 to Val-17. Basic residues predominate over residues Gly-25–Lys-37. The span at Ser-44–Leu-53 shows a compositional bias: polar residues. Residues Cys-180–Glu-327 form the JmjC domain. The Fe cation site is built by His-226, Asp-228, and His-291.

It belongs to the ROX family. NO66 subfamily. Fe(2+) serves as cofactor.

Its subcellular location is the nucleus. The catalysed reaction is N(6),N(6)-dimethyl-L-lysyl(36)-[histone H3] + 2 2-oxoglutarate + 2 O2 = L-lysyl(36)-[histone H3] + 2 formaldehyde + 2 succinate + 2 CO2. Its function is as follows. Oxygenase that can act as both a histone lysine demethylase and a ribosomal histidine hydroxylase. Specifically demethylates 'Lys-4' (H3K4me) and 'Lys-36' (H3K36me) of histone H3, thereby playing a central role in histone code. This Dictyostelium discoideum (Social amoeba) protein is Bifunctional lysine-specific demethylase and histidyl-hydroxylase NO66 (jcdg).